The primary structure comprises 867 residues: Cadherin-related family member 1 (867 aa).

Residues 1-21 (MKHEWNLCPSIFFSIFHICLS) form the signal peptide. The Extracellular segment spans residues 22-707 (VQTNYGPYFF…SKDNPMKALG (686 aa)). 6 consecutive Cadherin domains span residues 39 to 138 (NGNM…SPGF), 139 to 250 (LNTP…PPVF), 251 to 357 (VGTP…PPTF), 363 to 476 (PQNR…VPRF), 477 to 580 (SSEY…SPEF), and 572 to 692 (DIND…GPMA). A helical transmembrane segment spans residues 708–728 (VLAGVMAIMVVITIFISTAMF). Residues 729-867 (WRNKKSNRVM…KNAGSSMSFY (139 aa)) lie on the Cytoplasmic side of the membrane. Positions 777 to 825 (EMESGPKNENRNNNYQGIPVPPRAPCPPPPPRLMPKVSKTERSLPTVSG) are disordered. Pro residues predominate over residues 795–809 (PVPPRAPCPPPPPRL).

In terms of tissue distribution, expressed in photoreceptor cells of the outer nuclear layer of the retina and in the pinal gland.

The protein resides in the membrane. Functionally, potential calcium-dependent cell-adhesion protein. In Xenopus laevis (African clawed frog), this protein is Cadherin-related family member 1 (cdhr1).